The following is a 205-amino-acid chain: LexA repressor (205 aa).

A DNA-binding region (H-T-H motif) is located at residues 29-49; that stretch reads IRDICKATGLRSSSTVYNYLN. Residues S128 and K165 each act as for autocatalytic cleavage activity in the active site.

Belongs to the peptidase S24 family. In terms of assembly, homodimer.

The catalysed reaction is Hydrolysis of Ala-|-Gly bond in repressor LexA.. Its function is as follows. Represses a number of genes involved in the response to DNA damage (SOS response), including recA and lexA. In the presence of single-stranded DNA, RecA interacts with LexA causing an autocatalytic cleavage which disrupts the DNA-binding part of LexA, leading to derepression of the SOS regulon and eventually DNA repair. In Moorella thermoacetica (strain ATCC 39073 / JCM 9320), this protein is LexA repressor.